A 205-amino-acid polypeptide reads, in one-letter code: MASDHQTQAGKPQSLNPKIIIFEQENFQGHSHELNGPCPNLKETGVEKAGSVLVQAGPWVGYEQANCKGEQFVFEKGEYPRWDSWTSSRRTDSLSSLRPIKVDSQEHKIILYENPNFTGKKMEIIDDDVPSFHAHGYQEKVSSVRVQSGTWVGYQYPGYRGLQYLLEKGDYKDSSDFGAPHPQVQSVRRIRDMQWHQRGAFHPSN.

N-acetylalanine is present on Ala2. The interval 2-16 (ASDHQTQAGKPQSLN) is N-terminal arm. 2 consecutive Beta/gamma crystallin 'Greek key' domains span residues 17–56 (PKIIIFEQENFQGHSHELNGPCPNLKETGVEKAGSVLVQA) and 57–101 (GPWV…RPIK). The tract at residues 102-106 (VDSQE) is connecting peptide. Beta/gamma crystallin 'Greek key' domains lie at 107 to 148 (HKII…RVQS) and 149 to 191 (GTWV…RRIR). The segment at 193–205 (MQWHQRGAFHPSN) is C-terminal arm.

It belongs to the beta/gamma-crystallin family. As to quaternary structure, homo/heterodimer, or complexes of higher-order. The structure of beta-crystallin oligomers seems to be stabilized through interactions between the N-terminal arms.

Crystallins are the dominant structural components of the vertebrate eye lens. The polypeptide is Beta-crystallin B2 (CRYBB2) (Homo sapiens (Human)).